A 478-amino-acid polypeptide reads, in one-letter code: Alcohol dehydrogenase (quinone), cytochrome c subunit (478 aa).

The first 36 residues, 1-36 (MLNALTRDRLVSEMKQGWKLAAAIGLMAVSFGAAHA), serve as a signal peptide directing secretion. Position 37 is a pyrrolidone carboxylic acid (Gln37). 3 Cytochrome c domains span residues 42–145 (ALIK…MHGV), 189–304 (PEVA…KSMP), and 327–417 (GQGN…RKGW). Heme c is bound by residues Cys56, Cys59, His60, Cys204, Cys207, His208, Cys340, Cys343, and His344.

As to quaternary structure, the alcohol dehydrogenase multicomponent enzyme system is composed of a dehydrogenase subunit I (AdhA), a cytochrome c subunit II (AdhB) and a subunit III (AdhS). The cofactor is heme c.

The protein localises to the cell membrane. It catalyses the reaction ethanol + a ubiquinone = a ubiquinol + acetaldehyde. Its activity is regulated as follows. 2,6-dichloro-4-dicyanovinylphenol (PC16) and antimycin A inhibit ubiquinol oxidation activity more selectively than the ubiquinone reductase activity. Functionally, cytochrome c component of the alcohol dehydrogenase multicomponent enzyme system which is involved in the production of acetic acid and in the ethanol oxidase respiratory chain. Quinohemoprotein alcohol dehydrogenase (ADH) catalyzes the oxidation of ethanol to acetaldehyde by transferring electrons to the ubiquinone embedded in the membrane phospholipids. The electrons transfer from ethanol to membranous ubiquinone occurs from pyrroloquinoline quinone (PQQ) to one heme c in subunit I (AdhA), and finally to two heme c in subunit II (AdhB). Besides ubiquinone reduction, ADH also has a ubiquinol (QH2) oxidation reaction which mediates electron transfer from ubiquinol to the non-energy generating bypass oxidase system. The electrons transfer occurs from ubiquinol (QH2) to the additional heme c within subunit II (AdhB). Also able to use quinone analogs such as 2,3-dimethoxy-5-methyl-6-n-decyl-1,4-benzoquinone (DB) and 2,3-dimethoxy-5-methyl-6-n-pentyl-1,4-benzoquinone (PB). In Gluconobacter oxydans (strain 621H) (Gluconobacter suboxydans), this protein is Alcohol dehydrogenase (quinone), cytochrome c subunit.